The chain runs to 205 residues: Cytochrome c oxidase subunit 3 (205 aa).

Transmembrane regions (helical) follow at residues 29-49 (TIVFLSQELMFFAGLFAMYFV), 72-92 (ALLITVILVSSSVTCQFGVFA), 104-124 (WFLVTIILGSIFVIGQGYEYI), 142-162 (FFITTGFHALHVIAGVMAFVV), and 184-204 (SYYWHFVDVVWIGLFITIYFI).

In terms of assembly, associates with subunits I, II and IV to form cytochrome c oxidase. The 4 subunit cytochrome c oxidase forms a supercomplex with the menaquinol-cytochrome c reductase complex (cytochrome bc1).

The protein resides in the cell membrane. It catalyses the reaction 4 Fe(II)-[cytochrome c] + O2 + 8 H(+)(in) = 4 Fe(III)-[cytochrome c] + 2 H2O + 4 H(+)(out). This is Cytochrome c oxidase subunit 3 (ctaE) from Corynebacterium glutamicum (strain ATCC 13032 / DSM 20300 / JCM 1318 / BCRC 11384 / CCUG 27702 / LMG 3730 / NBRC 12168 / NCIMB 10025 / NRRL B-2784 / 534).